Reading from the N-terminus, the 233-residue chain is Ribonuclease 3 (233 aa).

In terms of domain architecture, RNase III spans 9 to 136 (LQHFWEQFHL…IIGSVYLSGG (128 aa)). Glutamate 49 is a Mg(2+) binding site. Aspartate 53 is an active-site residue. Positions 122 and 125 each coordinate Mg(2+). Glutamate 125 is an active-site residue. The DRBM domain maps to 162 to 231 (DSKSALQEFV…ARAALALLKV (70 aa)).

This sequence belongs to the ribonuclease III family. Homodimer. The cofactor is Mg(2+).

It localises to the cytoplasm. It carries out the reaction Endonucleolytic cleavage to 5'-phosphomonoester.. Its function is as follows. Digests double-stranded RNA. Involved in the processing of primary rRNA transcript to yield the immediate precursors to the large and small rRNAs (23S and 16S). Processes some mRNAs, and tRNAs when they are encoded in the rRNA operon. Processes pre-crRNA and tracrRNA of type II CRISPR loci if present in the organism. This chain is Ribonuclease 3, found in Moorella thermoacetica (strain ATCC 39073 / JCM 9320).